The primary structure comprises 453 residues: MALWGGRFSQESSALFKLFNDSLPVDYRLVEEDIVGSIAWADAITGVGILSQQECQSLKQALQELLAEVKDQPETILASGAEDTHSFVEQALIAKVGDLGKKLHTGRSRNDQVATDLKLWCKKEGKALLELLAQLKAALLSLAERELDAVMPGYTHLQRAQPVAFGHWCLAYVEMFERDISRLQDCLQRLDTCPLGTGALAGTAYPMDRYALAKSLGFASPTLNSLDSVSDRDHVIELCSDAAISMMHLSRMAEDLIFFNSGEAGFIELDDQVTSGSSLMPQKKNPDALELIRGKTGRVYGSLMGILTTMKALPLAYNKDMQEDKEGLFDVMDSWSICLEMAALVLSGLKVNRENTLSAAQQGYANATELADYLVAKGMPFREAHHVVGEVVVEAIAQKKPIEEFELASLQVFASVIQEDVYQCLTIDSCLAKREALGGTSLTQVKAALAAKG.

Belongs to the lyase 1 family. Argininosuccinate lyase subfamily.

It is found in the cytoplasm. It carries out the reaction 2-(N(omega)-L-arginino)succinate = fumarate + L-arginine. Its pathway is amino-acid biosynthesis; L-arginine biosynthesis; L-arginine from L-ornithine and carbamoyl phosphate: step 3/3. This chain is Argininosuccinate lyase, found in Shewanella loihica (strain ATCC BAA-1088 / PV-4).